The primary structure comprises 287 residues: NAD-dependent protein deacylase sir-2.2 (287 aa).

Residues 10–287 (AELCENSLKK…YKISDVLKEM (278 aa)) form the Deacetylase sirtuin-type domain. NAD(+) contacts are provided by residues 35–55 (GAGISTESGIPDYRSKDVGLY) and 116–119 (QNVD). The Proton acceptor role is filled by H134. Zn(2+)-binding residues include C142, C145, C196, and C199. Residues 236 to 238 (GTS), 262 to 264 (NIG), and I280 contribute to the NAD(+) site.

The protein belongs to the sirtuin family. Class II subfamily. As to quaternary structure, interacts with pyc-1, pcca-1 and mccc-1. Zn(2+) is required as a cofactor. Ubiquitously expressed with high expression in the pharynx, body wall muscles and gonad.

It is found in the mitochondrion matrix. It localises to the mitochondrion. The catalysed reaction is N(6)-acetyl-L-lysyl-[protein] + NAD(+) + H2O = 2''-O-acetyl-ADP-D-ribose + nicotinamide + L-lysyl-[protein]. Functionally, NAD-dependent protein deacylase. Catalyzes the NAD-dependent hydrolysis of acyl groups from lysine residues. Plays a role in oxidative stress resistance. This chain is NAD-dependent protein deacylase sir-2.2 (sir-2.2), found in Caenorhabditis elegans.